The primary structure comprises 325 residues: Large ribosomal subunit protein uL18 (325 aa).

The disordered stretch occupies residues 247–300 (IRIPPSRRNPRRRSPRSGGRWPSCRSPPARRRSRSTRPTSWPRSRPTSKPKRPR). 2 stretches are compositionally biased toward low complexity: residues 262–273 (RSGGRWPSCRSP) and 282–291 (TRPTSWPRSR).

It belongs to the universal ribosomal protein uL18 family. Component of the large ribosomal subunit (LSU).

The protein localises to the cytoplasm. The protein resides in the nucleus. Component of the ribosome, a large ribonucleoprotein complex responsible for the synthesis of proteins in the cell. The small ribosomal subunit (SSU) binds messenger RNAs (mRNAs) and translates the encoded message by selecting cognate aminoacyl-transfer RNA (tRNA) molecules. The large subunit (LSU) contains the ribosomal catalytic site termed the peptidyl transferase center (PTC), which catalyzes the formation of peptide bonds, thereby polymerizing the amino acids delivered by tRNAs into a polypeptide chain. The nascent polypeptides leave the ribosome through a tunnel in the LSU and interact with protein factors that function in enzymatic processing, targeting, and the membrane insertion of nascent chains at the exit of the ribosomal tunnel. This Anopheles gambiae (African malaria mosquito) protein is Large ribosomal subunit protein uL18 (RpL5).